The following is a 347-amino-acid chain: Large ribosomal subunit protein uL3 (347 aa).

The disordered stretch occupies residues 325–347 (RPPKKKPPVERPQITYISRESKQ).

Belongs to the universal ribosomal protein uL3 family. Part of the 50S ribosomal subunit. Forms a cluster with proteins L14 and L24e.

Its function is as follows. One of the primary rRNA binding proteins, it binds directly near the 3'-end of the 23S rRNA, where it nucleates assembly of the 50S subunit. This is Large ribosomal subunit protein uL3 from Thermococcus onnurineus (strain NA1).